Here is a 332-residue protein sequence, read N- to C-terminus: GLIPR1-like protein 2 (332 aa).

One can recognise an SCP domain in the interval 57 to 191; that stretch reads LHNELRGTVF…THAALFICNY (135 aa). N-linked (GlcNAc...) asparagine glycosylation occurs at asparagine 145. The chain crosses the membrane as a helical span at residues 253–273; sequence IFILFLRVASLLLCVIVVLIV. Residues 293–332 are disordered; sequence EGKTEVEIVMEEGEGEGEGGEGEGEGEEKEEEEMLEEDEQ. A compositionally biased stretch (acidic residues) spans 300 to 332; it reads IVMEEGEGEGEGGEGEGEGEEKEEEEMLEEDEQ.

This sequence belongs to the CRISP family.

Its subcellular location is the membrane. The polypeptide is GLIPR1-like protein 2 (Glipr1l2) (Mus musculus (Mouse)).